Here is a 78-residue protein sequence, read N- to C-terminus: Acyl carrier protein (78 aa).

Residues 2 to 77 (STIEERVKKI…AAIDYINGHQ (76 aa)) form the Carrier domain. Position 37 is an O-(pantetheine 4'-phosphoryl)serine (Ser37).

Belongs to the acyl carrier protein (ACP) family. Post-translationally, 4'-phosphopantetheine is transferred from CoA to a specific serine of apo-ACP by AcpS. This modification is essential for activity because fatty acids are bound in thioester linkage to the sulfhydryl of the prosthetic group.

It is found in the cytoplasm. Its pathway is lipid metabolism; fatty acid biosynthesis. Carrier of the growing fatty acid chain in fatty acid biosynthesis. The chain is Acyl carrier protein from Erwinia tasmaniensis (strain DSM 17950 / CFBP 7177 / CIP 109463 / NCPPB 4357 / Et1/99).